Here is a 156-residue protein sequence, read N- to C-terminus: 6,7-dimethyl-8-ribityllumazine synthase (156 aa).

5-amino-6-(D-ribitylamino)uracil contacts are provided by residues Phe-22, 57-59 (AYE), and 81-83 (TVI). A (2S)-2-hydroxy-3-oxobutyl phosphate-binding site is contributed by 86–87 (GT). The Proton donor role is filled by His-89. Phe-114 is a binding site for 5-amino-6-(D-ribitylamino)uracil. Residue Arg-128 participates in (2S)-2-hydroxy-3-oxobutyl phosphate binding.

Belongs to the DMRL synthase family. In terms of assembly, forms an icosahedral capsid composed of 60 subunits, arranged as a dodecamer of pentamers.

It carries out the reaction (2S)-2-hydroxy-3-oxobutyl phosphate + 5-amino-6-(D-ribitylamino)uracil = 6,7-dimethyl-8-(1-D-ribityl)lumazine + phosphate + 2 H2O + H(+). It functions in the pathway cofactor biosynthesis; riboflavin biosynthesis; riboflavin from 2-hydroxy-3-oxobutyl phosphate and 5-amino-6-(D-ribitylamino)uracil: step 1/2. Catalyzes the formation of 6,7-dimethyl-8-ribityllumazine by condensation of 5-amino-6-(D-ribitylamino)uracil with 3,4-dihydroxy-2-butanone 4-phosphate. This is the penultimate step in the biosynthesis of riboflavin. This Serratia proteamaculans (strain 568) protein is 6,7-dimethyl-8-ribityllumazine synthase.